We begin with the raw amino-acid sequence, 473 residues long: Argininosuccinate lyase (473 aa).

It belongs to the lyase 1 family. Argininosuccinate lyase subfamily.

The protein localises to the cytoplasm. It catalyses the reaction 2-(N(omega)-L-arginino)succinate = fumarate + L-arginine. The protein operates within amino-acid biosynthesis; L-arginine biosynthesis; L-arginine from L-ornithine and carbamoyl phosphate: step 3/3. This Chelativorans sp. (strain BNC1) protein is Argininosuccinate lyase.